The primary structure comprises 400 residues: MQMSTVCLALGLALVFGEASASYLHETRAAELATDFGVKVFKQVAQASKDRNMVFSPYGLASVLAMLQLTTAGETRQQIQEAMRFQIDEKGMAPALRQLYKELMGPWNKDEISTADAIFVQRDLKLVHGFMPYFFRLFQTTVKQVDFSEVERARFIINDWVKRHTKGMIGDLLGRGTVDQLTRLMLVNALYFNGQWKTPFPKSGTHHRLFHKSDGSTVSVPMMAQTNKFNYTEFSTPEGRYYDILELPYHGDTLSMFIAAPYEKDVPLSALTNILDAQLISQWKGNMTRRLRLLVLPKFSLESEVNLRGPLENLGMTDMFRPNQADFSSLSDQEALYVSQALQKVKIEVNESGTVASSSTAIIVSARMAPEEIIMDRPFLFVVRHNPTGTVLFMGQVMEP.

The first 21 residues, 1–21, serve as a signal peptide directing secretion; it reads MQMSTVCLALGLALVFGEASA. Asn-230, Asn-286, and Asn-350 each carry an N-linked (GlcNAc...) asparagine glycan.

This sequence belongs to the serpin family. As to quaternary structure, forms a heterodimer with TMPRSS7. Interacts with VTN. Binds LRP1B; binding is followed by internalization and degradation. Interacts with PPP1CB. In complex with PLAU/uPA, interacts with PLAUR/uPAR. Interacts with SORL1 and LRP1, either alone or in complex with PLAU; these interactions are abolished in the presence of LRPAP1/RAP. The ternary complex composed of PLAUR-PLAU-PAI1 also interacts with SORL1. Interacts with PLAT/tPA. Also interacts with SORL1, when complexed to PLAT/tPA.

It is found in the secreted. Its function is as follows. Serine protease inhibitor. Inhibits TMPRSS7. Is a primary inhibitor of tissue-type plasminogen activator (PLAT) and urokinase-type plasminogen activator (PLAU). As PLAT inhibitor, it is required for fibrinolysis down-regulation and is responsible for the controlled degradation of blood clots. As PLAU inhibitor, it is involved in the regulation of cell adhesion and spreading. Acts as a regulator of cell migration, independently of its role as protease inhibitor. It is required for stimulation of keratinocyte migration during cutaneous injury repair. It is involved in cellular and replicative senescence. Plays a role in alveolar type 2 cells senescence in the lung. Is involved in the regulation of cementogenic differentiation of periodontal ligament stem cells, and regulates odontoblast differentiation and dentin formation during odontogenesis. This is Plasminogen activator inhibitor 1 (SERPINE1) from Neovison vison (American mink).